The sequence spans 395 residues: Serine/threonine-protein kinase BIK1 (395 aa).

The N-myristoyl glycine moiety is linked to residue glycine 2. Residue cysteine 4 is the site of S-palmitoyl cysteine attachment. Serine 26 carries the post-translational modification Phosphoserine. Lysine 31 is covalently cross-linked (Glycyl lysine isopeptide (Lys-Gly) (interchain with G-Cter in ubiquitin)). 3 positions are modified to phosphoserine: serine 32, serine 33, and serine 34. At threonine 35 the chain carries Phosphothreonine. Lysine 41 participates in a covalent cross-link: Glycyl lysine isopeptide (Lys-Gly) (interchain with G-Cter in ubiquitin). Threonine 42 is subject to Phosphothreonine. Serine 48 carries the phosphoserine; by autocatalysis and BAK1 modification. Threonine 50 bears the Phosphothreonine mark. The residue at position 54 (serine 54) is a Phosphoserine; by autocatalysis. Threonine 56 bears the Phosphothreonine; by autocatalysis mark. The residue at position 64 (threonine 64) is a Phosphothreonine. The region spanning phenylalanine 67–leucine 356 is the Protein kinase domain. Serine 71 carries the phosphoserine; by autocatalysis and BAK1 modification. Isoleucine 73–valine 81 is an ATP binding site. Residue serine 89 is modified to Phosphoserine; by EFR. The short motif at serine 89 to threonine 90 is the Required for physical interaction with and phosphorylation of downstream signaling proteins (e.g. WRKY33, WRKY50, WRKY51 and WRKY57) to activate EFR-mediated immune signaling element. At threonine 90 the chain carries Phosphothreonine; by EFR. A Glycyl lysine isopeptide (Lys-Gly) (interchain with G-Cter in ubiquitin) cross-link involves residue lysine 95. Lysine 105 contributes to the ATP binding site. Threonine 120 bears the Phosphothreonine; by EFR mark. Serine 129 carries the phosphoserine; by autocatalysis modification. Serine 129 is subject to Phosphoserine; by EFR. Tyrosine 150 carries the post-translational modification Phosphotyrosine. Residue tyrosine 168 is modified to Phosphotyrosine; by autocatalysis. Glycyl lysine isopeptide (Lys-Gly) (interchain with G-Cter in ubiquitin) cross-links involve residues lysine 170 and lysine 186. Residue serine 193 is modified to Phosphoserine. Aspartate 202 acts as the Proton acceptor in catalysis. Serine 206 is subject to Phosphoserine; by autocatalysis and BAK1. Position 214 is a phosphotyrosine; by autocatalysis (tyrosine 214). At serine 219 the chain carries Phosphoserine. Serine 233 bears the Phosphoserine; by autocatalysis mark. An O-UMP-serine; by Xanthomonas campestris effector XopAC/AvrAC; alternate modification is found at serine 236. At serine 236 the chain carries Phosphoserine; by autocatalysis and BAK1; alternate. Threonine 237 is subject to O-UMP-threonine; by Xanthomonas campestris effector XopAC/AvrAC; alternate. Residue threonine 237 is modified to Phosphothreonine; by autocatalysis and BAK1; alternate. Threonine 242 carries the post-translational modification Phosphothreonine; by autocatalysis and BAK1. Position 243 is a phosphotyrosine (tyrosine 243). Tyrosine 250 carries the post-translational modification Phosphotyrosine; by autocatalysis. Residues serine 252 and serine 253 each carry the phosphoserine; by autocatalysis modification. Lysine 286 is covalently cross-linked (Glycyl lysine isopeptide (Lys-Gly) (interchain with G-Cter in ubiquitin)). A Phosphothreonine; by autocatalysis modification is found at threonine 314. A Glycyl lysine isopeptide (Lys-Gly) (interchain with G-Cter in ubiquitin) cross-link involves residue lysine 337. Threonine 341 carries the phosphothreonine modification. Positions aspartate 354–valine 365 are enriched in polar residues. The segment at aspartate 354–valine 395 is disordered. Lysine 358 is covalently cross-linked (Glycyl lysine isopeptide (Lys-Gly) (interchain with G-Cter in ubiquitin)). The residue at position 360 (serine 360) is a Phosphoserine; by autocatalysis and BAK1. A Phosphothreonine; by autocatalysis and BAK1 modification is found at threonine 362. Lysine 366 is covalently cross-linked (Glycyl lysine isopeptide (Lys-Gly) (interchain with G-Cter in ubiquitin)). Threonine 368 carries the post-translational modification Phosphothreonine; by autocatalysis and BAK1. A phosphothreonine mark is found at threonine 375 and threonine 377.

This sequence belongs to the protein kinase superfamily. Ser/Thr protein kinase family. Interacts with FLS2. Activation of FLS2 by flagellin (flg22) induces the dissociation of the complex. Interacts with BAK1. Interacts with the Xanthomonas campestris effector XopAC/AvrAC. Interacts with CPK28. Interacts with PEPR1. Interacts with PP2C38. Interacts with BRI1. Interacts with RBOHD. Binds to EFR when not phosphorylated at Ser-89 and Thr-90, in the absence of pathogen elicitor; dissociates upon pathogen-associated molecular pattern (PAMP)-triggered activation by EFR-mediated phosphorylation. Interacts directly with and phosphorylates WRKY transcription factors in the nucleus involved in the jasmonic acid (JA) and salicylic acid (SA) regulation (e.g. WRKY33, WRKY50, WRKY51 and WRKY57) to modulate defense hormones during plant immunity. Binds to ATL44/RHA3A and ATL45/RHA3B. Binds to SIK1 to be phosphorylated and stabilized. Post-translationally, phosphorylated by SIK1 to be stabilized. Phosphorylated by FLS2 and BAK1. Autophosphorylated. Autophosphorylation is reduced in presence of the Xanthomonas campestris effector XopAC/AvrAC. Phosphorylated, especially by EFR at Ser-89 and Thr-90, in response to the microbe-associated molecular pattern (MAMP) flg22. Phosphorylation in response to flg22 is abolished in presence of the Xanthomonas campestris effector XopAC/AvrAC. Phosphorylated at Ser-233, Ser-236 and Thr-237 by PEPR1. Phosphorylated at Tyr-150, Tyr-243 and Tyr-250. Tyrosine phosphorylation is required for BIK1 function in plant innate immunity. Uridylylated at Ser-236 and Thr-237 by the Xanthomonas campestris effector XopAC/AvrAC. This conceals conserved phosphorylation sites in the activation loop, reducing BIK1 kinase activity and consequently inhibiting downstream signaling. In terms of processing, monoubiquitinated by ATL44/RHA3A and ATL45/RHA3B following phosphorylation upon the recognition of microbe-associated molecular patterns (MAMPs, e.g. flg22) by pattern recognition receptors (PRRs), then released from the FLS2/BAK1 complex and internalized dynamically into endocytic compartments followed by the activation of immune signaling.

Its subcellular location is the cell membrane. It localises to the endosome membrane. It is found in the nucleus. The catalysed reaction is L-seryl-[protein] + ATP = O-phospho-L-seryl-[protein] + ADP + H(+). It carries out the reaction L-threonyl-[protein] + ATP = O-phospho-L-threonyl-[protein] + ADP + H(+). With respect to regulation, kinase activation is repressed by the phosphatase PP2C38. Plays a central role in immune responses. Required to activate the resistance responses to necrotrophic pathogens, including the regulation of defense hormone expression (e.g. jasmonic acid (JA) and salicylic acid (SA)). Phosphorylates FLS2 and BAK1. Involved in pathogen-associated molecular pattern (PAMP)-triggered immunity (PTI) signaling, including calcium signaling, and defense responses downstream of FLS2; upon PAMP recognition, first phosphorylated by FLS2 and SIK1 prior to being monoubiquitinated by ATL44/RHA3A and ATL45/RHA3B at the plasma membrane, then internalized dynamically into endocytic compartments together with FLS2. Acts additively with PBL1 in PTI defenses. Acts as a positive regulator of the PAMP flg22-induced increase of cytosolic calcium. Upon flg22 perception, phosphorylates and activates the calcium-permeable channel OSCA1.3, promoting stomatal closure. Phosphorylates the NADPH oxidase RBOHD at specific sites in a calcium-independent manner to enhance reactive oxygen species (ROS) generation upon flg22 perception. ROS production in response to flg22 controls stomatal movement and restriction of bacterial entry into leaf tissues. Seems not required for flg22-induced MAPK activation. Required for Pep1-induced defenses. Pep1 is an endogenous elicitor that potentiates PAMP-inducible plant responses. In association with PEPR1, acts downstream of the canonical ethylene signaling cascade to regulate ethylene responses. Involved in ethylene signaling. Destabilizes EIN3, the key transcription activator in ethylene signaling, and represses EIN3-dependent transcription. Acts as a negative regulator in brassinosteroid (BR) signaling. Functions in BR signaling by direct interaction with the BR receptor BRI1 cytosolic kinase domain. Required during SCOOP small peptides (e.g. SCOOP10 and SCOOP12) perception and signaling; receptor-like cytosolic kinases (RLCK) activated by BAK1/SERK3 and SERK4 coreceptors when associated with MIK2 upon the perception of SCOOP peptides. In terms of biological role, (Microbial infection) Xanthomonas campestris effector AvrAC/XopAC-mediated uridylylation prevents activation by phosphorylation at the same residues, thus affecting immune responses and reducing defense responses toward X.campestris, mediating avrAC/XopAC virulence functions. The chain is Serine/threonine-protein kinase BIK1 from Arabidopsis thaliana (Mouse-ear cress).